The sequence spans 387 residues: Gamma-butyrobetaine dioxygenase (387 aa).

The Zn(2+) site is built by cysteine 38, cysteine 40, cysteine 43, and histidine 82. Positions 202, 204, and 347 each coordinate Fe cation. Serine 351 bears the Phosphoserine mark.

Belongs to the gamma-BBH/TMLD family. Fe(2+) is required as a cofactor. It depends on L-ascorbate as a cofactor. Highly expressed in kidney; moderately expressed in liver; very low expression in brain.

The protein localises to the cytoplasm. The catalysed reaction is 4-(trimethylamino)butanoate + 2-oxoglutarate + O2 = carnitine + succinate + CO2. It participates in amine and polyamine biosynthesis; carnitine biosynthesis. Its function is as follows. Catalyzes the formation of L-carnitine from gamma-butyrobetaine. The polypeptide is Gamma-butyrobetaine dioxygenase (BBOX1) (Homo sapiens (Human)).